The chain runs to 259 residues: Large ribosomal subunit protein uL4 (259 aa).

Residues 47–67 form a disordered region; that stretch reads WGTDPMAGKRTTAESFGSGRG.

This sequence belongs to the universal ribosomal protein uL4 family. Part of the 50S ribosomal subunit.

One of the primary rRNA binding proteins, this protein initially binds near the 5'-end of the 23S rRNA. It is important during the early stages of 50S assembly. It makes multiple contacts with different domains of the 23S rRNA in the assembled 50S subunit and ribosome. In terms of biological role, forms part of the polypeptide exit tunnel. This Methanosphaera stadtmanae (strain ATCC 43021 / DSM 3091 / JCM 11832 / MCB-3) protein is Large ribosomal subunit protein uL4.